Here is a 691-residue protein sequence, read N- to C-terminus: Germ cell nuclear acidic protein (691 aa).

The SUMO interaction motif 1 (SIM) motif lies at 22–25 (ILNV). The interval 25–488 (VQSSSDDTSG…GAAKVEKRKT (464 aa)) is disordered. Positions 27-36 (SSSDDTSGSS) are enriched in low complexity. Positions 48 to 63 (CILNVQSRSGDTSGSS) are enriched in polar residues. Short sequence motifs (SUMO interaction motif 1 (SIM)) lie at residues 76-79 (VVVI), 97-100 (LLEI), and 121-124 (IVIS). Positions 86-97 (ECHTHEEKKAKL) are enriched in basic and acidic residues. Residues 124-333 (SDDDNDDDNG…VPDDNSDDLE (210 aa)) are compositionally biased toward acidic residues. Basic residues predominate over residues 467-488 (GHKKRGPSKKKPGAAKVEKRKT). Positions 522–677 (VQRIYDLFNR…AKCKGSLVMV (156 aa)) constitute a SprT-like domain.

It belongs to the serine-aspartate repeat-containing protein (SDr) family. In terms of assembly, interacts (via SIM domains) with SUMO2; this interaction allows the GCNA recruitment to DPCs sites. Interacts with TOP2A; this interaction allows the resolution of topoisomerase II (TOP2A) DNA-protein cross-links. As to expression, expressed in germ cells of the testis (at protein level). Detected in skeletal muscle, liver, kidney, pancreas, heart, lung and brain. Expressed throughout spermatogenesis, from spermatogonia to elongated spermatids, in normal adult testis (at protein level).

It localises to the nucleus. It is found in the PML body. The protein resides in the chromosome. May play a role in DNA-protein cross-links (DPCs) clearance through a SUMO-dependent recruitment to sites of DPCs, ensuring the genomic stability by protecting germ cells and early embryos from various sources of damage. Can resolve the topoisomerase II (TOP2A) DPCs. This Homo sapiens (Human) protein is Germ cell nuclear acidic protein.